The primary structure comprises 195 residues: Orotate phosphoribosyltransferase (195 aa).

5-phospho-alpha-D-ribose 1-diphosphate contacts are provided by residues R87, K91, and 112–120; that span reads DDVATTGGS. Positions 116 and 144 each coordinate orotate.

Belongs to the purine/pyrimidine phosphoribosyltransferase family. PyrE subfamily. Homodimer. The cofactor is Mg(2+).

It catalyses the reaction orotidine 5'-phosphate + diphosphate = orotate + 5-phospho-alpha-D-ribose 1-diphosphate. It functions in the pathway pyrimidine metabolism; UMP biosynthesis via de novo pathway; UMP from orotate: step 1/2. In terms of biological role, catalyzes the transfer of a ribosyl phosphate group from 5-phosphoribose 1-diphosphate to orotate, leading to the formation of orotidine monophosphate (OMP). The protein is Orotate phosphoribosyltransferase of Sulfurisphaera tokodaii (strain DSM 16993 / JCM 10545 / NBRC 100140 / 7) (Sulfolobus tokodaii).